Consider the following 1342-residue polypeptide: DNA-directed RNA polymerase subunit beta (1342 aa).

This sequence belongs to the RNA polymerase beta chain family. As to quaternary structure, the RNAP catalytic core consists of 2 alpha, 1 beta, 1 beta' and 1 omega subunit. When a sigma factor is associated with the core the holoenzyme is formed, which can initiate transcription.

The enzyme catalyses RNA(n) + a ribonucleoside 5'-triphosphate = RNA(n+1) + diphosphate. In terms of biological role, DNA-dependent RNA polymerase catalyzes the transcription of DNA into RNA using the four ribonucleoside triphosphates as substrates. The chain is DNA-directed RNA polymerase subunit beta from Pseudoalteromonas atlantica (strain T6c / ATCC BAA-1087).